Here is a 269-residue protein sequence, read N- to C-terminus: Zinc transporter ZupT (269 aa).

Transmembrane regions (helical) follow at residues 11 to 31 (IALA…LLVL), 40 to 60 (LLAF…LSEI), 80 to 100 (YGTL…HFIP), 125 to 145 (ALLT…ATFF), 158 to 178 (AFAI…PVYF), 187 to 207 (FSAS…GYWL), 217 to 237 (FGWV…DELL), and 249 to 269 (TVYG…LFKW). The Fe(2+) site is built by N136 and E139. Positions 139 and 164 each coordinate Zn(2+). The Fe(2+) site is built by N165, E168, and E197. E168 is a binding site for Zn(2+).

The protein belongs to the ZIP transporter (TC 2.A.5) family. ZupT subfamily.

It localises to the cell inner membrane. It carries out the reaction Zn(2+)(in) = Zn(2+)(out). Functionally, mediates zinc uptake. May also transport other divalent cations. The chain is Zinc transporter ZupT from Stenotrophomonas maltophilia (strain K279a).